A 237-amino-acid chain; its full sequence is Uridylate kinase (237 aa).

9-12 (KLSG) contacts ATP. Residues 17-22 (GTQGYG) form an involved in allosteric activation by GTP region. G51 is a UMP binding site. Residues G52 and R56 each coordinate ATP. UMP-binding positions include D71 and 132 to 139 (CGNPFFTT). Residues T159, Y165, and D168 each contribute to the ATP site.

It belongs to the UMP kinase family. In terms of assembly, homohexamer.

It localises to the cytoplasm. The catalysed reaction is UMP + ATP = UDP + ADP. It participates in pyrimidine metabolism; CTP biosynthesis via de novo pathway; UDP from UMP (UMPK route): step 1/1. Allosterically activated by GTP. Inhibited by UTP. Functionally, catalyzes the reversible phosphorylation of UMP to UDP. This chain is Uridylate kinase, found in Parasynechococcus marenigrum (strain WH8102).